Consider the following 308-residue polypeptide: ATP synthase gamma chain (308 aa).

It belongs to the ATPase gamma chain family. F-type ATPases have 2 components, CF(1) - the catalytic core - and CF(0) - the membrane proton channel. CF(1) has five subunits: alpha(3), beta(3), gamma(1), delta(1), epsilon(1). CF(0) has three main subunits: a, b and c.

The protein localises to the cell membrane. In terms of biological role, produces ATP from ADP in the presence of a proton gradient across the membrane. The gamma chain is believed to be important in regulating ATPase activity and the flow of protons through the CF(0) complex. This chain is ATP synthase gamma chain, found in Mycobacteroides abscessus (strain ATCC 19977 / DSM 44196 / CCUG 20993 / CIP 104536 / JCM 13569 / NCTC 13031 / TMC 1543 / L948) (Mycobacterium abscessus).